The sequence spans 164 residues: SsrA-binding protein (164 aa).

Residues 141–164 (KLHDKRQDEKQKSIKREINSALKR) form a disordered region. Residues 145-158 (KRQDEKQKSIKREI) are compositionally biased toward basic and acidic residues.

This sequence belongs to the SmpB family.

It is found in the cytoplasm. Its function is as follows. Required for rescue of stalled ribosomes mediated by trans-translation. Binds to transfer-messenger RNA (tmRNA), required for stable association of tmRNA with ribosomes. tmRNA and SmpB together mimic tRNA shape, replacing the anticodon stem-loop with SmpB. tmRNA is encoded by the ssrA gene; the 2 termini fold to resemble tRNA(Ala) and it encodes a 'tag peptide', a short internal open reading frame. During trans-translation Ala-aminoacylated tmRNA acts like a tRNA, entering the A-site of stalled ribosomes, displacing the stalled mRNA. The ribosome then switches to translate the ORF on the tmRNA; the nascent peptide is terminated with the 'tag peptide' encoded by the tmRNA and targeted for degradation. The ribosome is freed to recommence translation, which seems to be the essential function of trans-translation. The polypeptide is SsrA-binding protein (Prochlorococcus marinus (strain MIT 9215)).